A 551-amino-acid polypeptide reads, in one-letter code: MTIAAENLTANHPRRKWTDYFTFCVDHKVIGIQYLVTSFLFFFIGGSFAEAMRTELATPSPDFVQPEMYNQLMTLHGTIMIFLWIVPAGAAFANYLIPLMVGTEDMAFPRLNAVAFWLTPPGGILLISSFFVGAPQAGWTSYPPLSLLSGKWGEELWILSLLLVGTSSILGAINFVTTILKMRIKDMDLHSMPLFCWAMLATSSLILLSTPVLASALILLSFDLIAGTSFFNPVGGGDPVVYQHLFWFYSHPAVYIMILPFFGVISEVIPVHARKPIFGYRAIAYSSLAISFLGLIVWAHHMFTSGTPGWLRMFFMATTMLIAVPTGIKIFSWCGTLWGGKIQLNSAMLFAFGFLSSFMIGGLTGVMVASVPFDIHVHDTYFVVGHFHYVLFGGSAFALFSGVYHWFPKMTGRMVNEPLGRLHFILTFIGMNLTFMPMHELGLMGMNRRIALYDVEFQPLNVLSTIGAYVLAASTIPFVINVFWSLFKGEKAARNPWRALTLEWQTASPPIIENFEEEPVLWCGPYDFGIDTELMDDEETVQTLIADAAGS.

A helical transmembrane segment spans residues 29–49 (VIGIQYLVTSFLFFFIGGSFA). His-76 contributes to the Fe(II)-heme a binding site. Helical transmembrane passes span 79-99 (IMIF…LIPL), 113-133 (AVAF…FFVG), 156-176 (LWIL…INFV), 205-225 (LILL…FDLI), 245-265 (LFWF…FGVI), 283-303 (IAYS…HHMF), 313-333 (MFFM…IFSW), 348-368 (MLFA…GVMV), 382-402 (FVVG…LFSG), 424-444 (FILT…LGLM), and 466-486 (IGAY…FWSL). Cu cation-binding residues include His-251, Tyr-255, His-300, and His-301. Residues 251 to 255 (HPAVY) constitute a cross-link (1'-histidyl-3'-tyrosine (His-Tyr)). His-386 is a binding site for heme a3. His-388 contributes to the Fe(II)-heme a binding site.

This sequence belongs to the heme-copper respiratory oxidase family. It depends on Cu(2+) as a cofactor. The cofactor is heme.

It is found in the cell membrane. It carries out the reaction 4 Fe(II)-[cytochrome c] + O2 + 8 H(+)(in) = 4 Fe(III)-[cytochrome c] + 2 H2O + 4 H(+)(out). It functions in the pathway energy metabolism; oxidative phosphorylation. Cytochrome c oxidase is the component of the respiratory chain that catalyzes the reduction of oxygen to water. Subunits 1-3 form the functional core of the enzyme complex. CO I is the catalytic subunit of the enzyme. Electrons originating in cytochrome c are transferred via the copper A center of subunit 2 and heme A of subunit 1 to the bimetallic center formed by heme A3 and copper B. This Synechocystis sp. (strain ATCC 27184 / PCC 6803 / Kazusa) protein is Cytochrome c oxidase subunit 1 (ctaD).